Here is a 1944-residue protein sequence, read N- to C-terminus: Chromatin-remodeling ATPase INO80 (1944 aa).

The tract at residues 1-518 (MEPSKFHSTV…QANGLTKQKA (518 aa)) is disordered. Positions 73-83 (QHHYSASSAAS) are enriched in low complexity. Residues 84–98 (GPQSTYNGANNGVPQ) are compositionally biased toward polar residues. Positions 101–111 (SHSRSNSHSRH) are enriched in basic residues. 3 stretches are compositionally biased toward polar residues: residues 139 to 149 (SPQTSGLQAPQ), 208 to 223 (AGSS…VSTP), and 289 to 307 (NILN…QAES). Low complexity predominate over residues 312 to 323 (AAVPAATPSRAA). Polar residues predominate over residues 327–336 (SFSNILSSSE). 2 stretches are compositionally biased toward basic and acidic residues: residues 356-382 (PEPE…EPSK) and 429-464 (ESEK…ERVT). Coiled coils occupy residues 506–563 (AKRQ…KALE) and 624–696 (EQEL…KGIK). The segment at 715-815 (ATFSADSMEP…EEPPPKKKGK (101 aa)) is disordered. Over residues 727–739 (GKGKGRAGNRPKK) the composition is skewed to basic residues. Composition is skewed to basic and acidic residues over residues 740–751 (SKEQKQAEKEAA), 782–791 (LSKDKDRDVD), and 800–815 (TEIK…KKGK). In terms of domain architecture, DBINO spans 840–965 (IWRDMARKDV…SHFIGKKIKT (126 aa)). Residues 908-953 (KRNEREERDLRKAAERQELENARKEEADREAARQKRKLNFLISQTE) are a coiled coil. Residues 966–986 (DEVERSTDRPEVAAEEQKNKP) show a composition bias toward basic and acidic residues. The disordered stretch occupies residues 966–1003 (DEVERSTDRPEVAAEEQKNKPAGENALTVKEPTGPVGA). A Helicase ATP-binding domain is found at 1090-1262 (VNLYEQGING…WALLHFIMPS (173 aa)). An ATP-binding site is contributed by 1103-1110 (DEMGLGKT). A DEAQ box motif is present at residues 1213 to 1216 (DEAQ). Residues 1663–1818 (KLDELLFKLK…GGAGASSGVD (156 aa)) form the Helicase C-terminal domain. Residues 1862–1873 (AKKRGGGKRKKV) are compositionally biased toward basic residues. Residues 1862–1944 (AKKRGGGKRK…LAIADGQMDM (83 aa)) are disordered. A compositionally biased stretch (basic and acidic residues) spans 1887-1900 (EMYHEGEGNFDDNK). A compositionally biased stretch (basic residues) spans 1918-1932 (GKKKKATGKKAKTTK).

This sequence belongs to the SNF2/RAD54 helicase family. Component of the INO80 chromatin-remodeling complex.

The protein localises to the nucleus. It carries out the reaction ATP + H2O = ADP + phosphate + H(+). Functionally, ATPase component of the INO80 complex which remodels chromatin by shifting nucleosomes and is involved in DNA repair. This chain is Chromatin-remodeling ATPase INO80 (INO80), found in Pyricularia oryzae (strain 70-15 / ATCC MYA-4617 / FGSC 8958) (Rice blast fungus).